A 196-amino-acid chain; its full sequence is Probable nicotinate-nucleotide adenylyltransferase (196 aa).

It belongs to the NadD family.

The catalysed reaction is nicotinate beta-D-ribonucleotide + ATP + H(+) = deamido-NAD(+) + diphosphate. It participates in cofactor biosynthesis; NAD(+) biosynthesis; deamido-NAD(+) from nicotinate D-ribonucleotide: step 1/1. Catalyzes the reversible adenylation of nicotinate mononucleotide (NaMN) to nicotinic acid adenine dinucleotide (NaAD). The polypeptide is Probable nicotinate-nucleotide adenylyltransferase (Thermotoga sp. (strain RQ2)).